Consider the following 207-residue polypeptide: Fibronectin type III domain-containing protein 5b (207 aa).

The N-terminal stretch at methionine 1–alanine 26 is a signal peptide. Residues aspartate 27 to arginine 146 are Extracellular-facing. The region spanning alanine 31–glutamate 122 is the Fibronectin type-III domain. Residues asparagine 34 and asparagine 79 are each glycosylated (N-linked (GlcNAc...) asparagine). Residues alanine 147–phenylalanine 167 form a helical membrane-spanning segment. The Cytoplasmic portion of the chain corresponds to cysteine 168–valine 207. Residues glutamate 178 to asparagine 188 are compositionally biased toward basic and acidic residues. The tract at residues glutamate 178–valine 207 is disordered. The Microbody targeting signal signature appears at serine 205–valine 207.

As to quaternary structure, dimer; may exist in other oligomeric forms. The extracellular domain is cleaved and released from the cell membrane.

The protein resides in the cell membrane. It localises to the peroxisome membrane. The protein localises to the secreted. In terms of biological role, may mediate beneficial effects of muscular exercise. The chain is Fibronectin type III domain-containing protein 5b (fndc5b) from Danio rerio (Zebrafish).